We begin with the raw amino-acid sequence, 89 residues long: MATVLAKIKIMPTSPEVNKEKLKEKIKEVLEKQDVAIRGLFDEPLAFGLYAIYTVIEMEEREGGTEPIENALAEIDEVESVETVEVSLA.

Belongs to the EF-1-beta/EF-1-delta family.

Functionally, promotes the exchange of GDP for GTP in EF-1-alpha/GDP, thus allowing the regeneration of EF-1-alpha/GTP that could then be used to form the ternary complex EF-1-alpha/GTP/AAtRNA. The chain is Elongation factor 1-beta (ef1b) from Methanocaldococcus jannaschii (strain ATCC 43067 / DSM 2661 / JAL-1 / JCM 10045 / NBRC 100440) (Methanococcus jannaschii).